A 99-amino-acid chain; its full sequence is A-type ATP synthase subunit F (99 aa).

The protein belongs to the V-ATPase F subunit family. Has multiple subunits with at least A(3), B(3), C, D, E, F, H, I and proteolipid K(x).

The protein resides in the cell membrane. Its function is as follows. Component of the A-type ATP synthase that produces ATP from ADP in the presence of a proton gradient across the membrane. This chain is A-type ATP synthase subunit F, found in Methanococcus maripaludis (strain C6 / ATCC BAA-1332).